The sequence spans 57 residues: Large ribosomal subunit protein eL20 (57 aa).

Positions 1-10 (MSEFTVTGTF) are enriched in polar residues. Positions 1–21 (MSEFTVTGTFESRDGNQPFEK) are disordered.

It belongs to the eukaryotic ribosomal protein eL20 family. As to quaternary structure, part of the 50S ribosomal subunit. Binds 23S rRNA.

The sequence is that of Large ribosomal subunit protein eL20 from Halomicrobium mukohataei (strain ATCC 700874 / DSM 12286 / JCM 9738 / NCIMB 13541) (Haloarcula mukohataei).